Here is a 96-residue protein sequence, read N- to C-terminus: Large ribosomal subunit protein bL25 (96 aa).

Belongs to the bacterial ribosomal protein bL25 family. Part of the 50S ribosomal subunit; part of the 5S rRNA/L5/L18/L25 subcomplex. Contacts the 5S rRNA. Binds to the 5S rRNA independently of L5 and L18.

In terms of biological role, this is one of the proteins that binds to the 5S RNA in the ribosome where it forms part of the central protuberance. The protein is Large ribosomal subunit protein bL25 of Francisella tularensis subsp. tularensis (strain FSC 198).